The following is a 224-amino-acid chain: Transmembrane protein C16orf54 (224 aa).

Residue threonine 4 is glycosylated (O-linked (GalNAc...) threonine). Residues 32–52 (IPIMLVLATLAALFILTTAVL) form a helical membrane-spanning segment. Disordered stretches follow at residues 104–138 (TDRA…SNLG) and 152–203 (WGPQ…GLQP). Residues threonine 112 and threonine 116 each carry the phosphothreonine modification. The residue at position 194 (serine 194) is a Phosphoserine.

Post-translationally, O-glycosylated with core 1 or possibly core 8 glycans.

It is found in the membrane. This Homo sapiens (Human) protein is Transmembrane protein C16orf54 (C16orf54).